A 623-amino-acid polypeptide reads, in one-letter code: tRNA uridine 5-carboxymethylaminomethyl modification enzyme MnmG (623 aa).

Residues 11-16 (GAGHAG), valine 123, and serine 178 contribute to the FAD site. NAD(+) is bound at residue 270–284 (GPRYCPSIETKIVTF). FAD is bound at residue glutamine 367.

It belongs to the MnmG family. As to quaternary structure, homodimer. Heterotetramer of two MnmE and two MnmG subunits. The cofactor is FAD.

It is found in the cytoplasm. Functionally, NAD-binding protein involved in the addition of a carboxymethylaminomethyl (cmnm) group at the wobble position (U34) of certain tRNAs, forming tRNA-cmnm(5)s(2)U34. This is tRNA uridine 5-carboxymethylaminomethyl modification enzyme MnmG from Phocaeicola vulgatus (strain ATCC 8482 / DSM 1447 / JCM 5826 / CCUG 4940 / NBRC 14291 / NCTC 11154) (Bacteroides vulgatus).